Consider the following 115-residue polypeptide: Large ribosomal subunit protein bL19 (115 aa).

It belongs to the bacterial ribosomal protein bL19 family.

This protein is located at the 30S-50S ribosomal subunit interface and may play a role in the structure and function of the aminoacyl-tRNA binding site. This Edwardsiella ictaluri (strain 93-146) protein is Large ribosomal subunit protein bL19.